We begin with the raw amino-acid sequence, 360 residues long: DNA replication and repair protein RecF (360 aa).

30 to 37 (GQNGSGKT) is an ATP binding site.

It belongs to the RecF family.

It localises to the cytoplasm. Functionally, the RecF protein is involved in DNA metabolism; it is required for DNA replication and normal SOS inducibility. RecF binds preferentially to single-stranded, linear DNA. It also seems to bind ATP. This Shewanella putrefaciens (strain CN-32 / ATCC BAA-453) protein is DNA replication and repair protein RecF.